The sequence spans 104 residues: NADH-quinone oxidoreductase subunit K (104 aa).

3 helical membrane-spanning segments follow: residues 4 to 24, 31 to 51, and 67 to 87; these read VPAS…LFGA, VIVL…LVAF, and LFTM…LIAL.

The protein belongs to the complex I subunit 4L family. As to quaternary structure, NDH-1 is composed of 14 different subunits. Subunits NuoA, H, J, K, L, M, N constitute the membrane sector of the complex.

The protein localises to the cell membrane. The enzyme catalyses a quinone + NADH + 5 H(+)(in) = a quinol + NAD(+) + 4 H(+)(out). In terms of biological role, NDH-1 shuttles electrons from NADH, via FMN and iron-sulfur (Fe-S) centers, to quinones in the respiratory chain. The immediate electron acceptor for the enzyme in this species is believed to be a menaquinone. Couples the redox reaction to proton translocation (for every two electrons transferred, four hydrogen ions are translocated across the cytoplasmic membrane), and thus conserves the redox energy in a proton gradient. The polypeptide is NADH-quinone oxidoreductase subunit K (Bacillus mycoides (strain KBAB4) (Bacillus weihenstephanensis)).